Consider the following 729-residue polypeptide: Polyribonucleotide nucleotidyltransferase (729 aa).

Asp516 and Asp522 together coordinate Mg(2+). Residues 581–641 form the KH domain; that stretch reads PSTEHFSINP…EKVAAAKEHI (61 aa). The 68-residue stretch at 658–725 folds into the S1 motif domain; that stretch reads GKTYVGKVKK…KGKKVELATP (68 aa).

It belongs to the polyribonucleotide nucleotidyltransferase family. The cofactor is Mg(2+).

The protein localises to the cytoplasm. The catalysed reaction is RNA(n+1) + phosphate = RNA(n) + a ribonucleoside 5'-diphosphate. In terms of biological role, involved in mRNA degradation. Catalyzes the phosphorolysis of single-stranded polyribonucleotides processively in the 3'- to 5'-direction. The chain is Polyribonucleotide nucleotidyltransferase from Sulfurovum sp. (strain NBC37-1).